Here is a 185-residue protein sequence, read N- to C-terminus: Ribosome-recycling factor (185 aa).

The protein belongs to the RRF family.

The protein localises to the cytoplasm. Functionally, responsible for the release of ribosomes from messenger RNA at the termination of protein biosynthesis. May increase the efficiency of translation by recycling ribosomes from one round of translation to another. The protein is Ribosome-recycling factor of Streptococcus suis (strain 98HAH33).